Consider the following 126-residue polypeptide: Large ribosomal subunit protein uL22 (126 aa).

This sequence belongs to the universal ribosomal protein uL22 family. In terms of assembly, part of the 50S ribosomal subunit.

This protein binds specifically to 23S rRNA; its binding is stimulated by other ribosomal proteins, e.g. L4, L17, and L20. It is important during the early stages of 50S assembly. It makes multiple contacts with different domains of the 23S rRNA in the assembled 50S subunit and ribosome. Functionally, the globular domain of the protein is located near the polypeptide exit tunnel on the outside of the subunit, while an extended beta-hairpin is found that lines the wall of the exit tunnel in the center of the 70S ribosome. The chain is Large ribosomal subunit protein uL22 from Dinoroseobacter shibae (strain DSM 16493 / NCIMB 14021 / DFL 12).